A 315-amino-acid polypeptide reads, in one-letter code: MAKHTTVLLDEAVNGLGLKTDGIYVDGTFGRGGHSRHILGQLGAQGRLIAIDRDPRAIETGEALMKEDPRFTIIHGPFSGLAEYIKELGLAGQIDGVLLDLGVSSPQIDDADRGFSFMRDGPLDMRMDPTSGISAAQWLAKADVDDIGWVLKTFGEEKFAFRIARAIVADRTETPFLRTLQLAQLIERLCPKREKKKHPATRSFQAIRIYVNSELEEIHKVLDGALEILAIGGQLSVISFHSLEDRIVKRFIRKQEKGREYPPGLPLTEAQMQHGKTLKSLAKALKPSAEEINENTRARSSVLRVAQKIAEPESE.

S-adenosyl-L-methionine is bound by residues 32-34 (GGH), Asp52, Phe78, Asp100, and Gln107.

Belongs to the methyltransferase superfamily. RsmH family.

It localises to the cytoplasm. It carries out the reaction cytidine(1402) in 16S rRNA + S-adenosyl-L-methionine = N(4)-methylcytidine(1402) in 16S rRNA + S-adenosyl-L-homocysteine + H(+). Functionally, specifically methylates the N4 position of cytidine in position 1402 (C1402) of 16S rRNA. The protein is Ribosomal RNA small subunit methyltransferase H of Psychromonas ingrahamii (strain DSM 17664 / CCUG 51855 / 37).